The primary structure comprises 98 residues: Cystatin-B (98 aa).

Methionine 1 bears the N-acetylmethionine mark. The Secondary area of contact signature appears at glutamine 46–glycine 50.

Belongs to the cystatin family. Able to form dimers stabilized by noncovalent forces.

It is found in the cytoplasm. In terms of biological role, this is an intracellular thiol proteinase inhibitor. The protein is Cystatin-B (CSTB) of Bos taurus (Bovine).